Here is a 1367-residue protein sequence, read N- to C-terminus: DNA-directed RNA polymerase subunit beta' (1367 aa).

The segment at 1–34 (MTSTSPKSRKSSSKRKGSKKKAARSKNVIPPLSK) is disordered. Residues 7–24 (KSRKSSSKRKGSKKKAAR) show a composition bias toward basic residues. The Zn(2+) site is built by Cys-250, Cys-317, Cys-324, and Cys-327. The disordered stretch occupies residues 1306-1367 (SVLDDPSDAD…LQEEGLLSDE (62 aa)). Low complexity predominate over residues 1355–1367 (LEGLQEEGLLSDE).

This sequence belongs to the RNA polymerase beta' chain family. RpoC2 subfamily. In cyanobacteria the RNAP catalytic core is composed of 2 alpha, 1 beta, 1 beta', 1 gamma and 1 omega subunit. When a sigma factor is associated with the core the holoenzyme is formed, which can initiate transcription. It depends on Zn(2+) as a cofactor.

The catalysed reaction is RNA(n) + a ribonucleoside 5'-triphosphate = RNA(n+1) + diphosphate. In terms of biological role, DNA-dependent RNA polymerase catalyzes the transcription of DNA into RNA using the four ribonucleoside triphosphates as substrates. This is DNA-directed RNA polymerase subunit beta' from Prochlorococcus marinus (strain SARG / CCMP1375 / SS120).